A 504-amino-acid chain; its full sequence is ATP synthase subunit alpha 2 (504 aa).

Position 169 to 176 (169 to 176 (GDRQTGKT)) interacts with ATP.

The protein belongs to the ATPase alpha/beta chains family. In terms of assembly, F-type ATPases have 2 components, CF(1) - the catalytic core - and CF(0) - the membrane proton channel. CF(1) has five subunits: alpha(3), beta(3), gamma(1), delta(1), epsilon(1). CF(0) has three main subunits: a(1), b(2) and c(9-12). The alpha and beta chains form an alternating ring which encloses part of the gamma chain. CF(1) is attached to CF(0) by a central stalk formed by the gamma and epsilon chains, while a peripheral stalk is formed by the delta and b chains.

The protein localises to the cell membrane. It carries out the reaction ATP + H2O + 4 H(+)(in) = ADP + phosphate + 5 H(+)(out). Produces ATP from ADP in the presence of a proton gradient across the membrane. The alpha chain is a regulatory subunit. The polypeptide is ATP synthase subunit alpha 2 (Listeria monocytogenes serovar 1/2a (strain ATCC BAA-679 / EGD-e)).